Here is a 287-residue protein sequence, read N- to C-terminus: Large ribosomal subunit protein uL2 (287 aa).

Positions 221 to 287 (RGSVMNPCDH…SKRSRGGRDS (67 aa)) are disordered. The span at 258-287 (KTRKKNKPSNKLVVRRRRRISKRSRGGRDS) shows a compositional bias: basic residues.

Belongs to the universal ribosomal protein uL2 family. In terms of assembly, part of the 50S ribosomal subunit. Forms a bridge to the 30S subunit in the 70S ribosome.

Functionally, one of the primary rRNA binding proteins. Required for association of the 30S and 50S subunits to form the 70S ribosome, for tRNA binding and peptide bond formation. It has been suggested to have peptidyltransferase activity; this is somewhat controversial. Makes several contacts with the 16S rRNA in the 70S ribosome. The protein is Large ribosomal subunit protein uL2 of Prochlorococcus marinus (strain MIT 9312).